Here is a 488-residue protein sequence, read N- to C-terminus: Regulatory protein ViaA (488 aa).

It belongs to the ViaA family. Homodimer. Interacts with RavA.

The protein resides in the cytoplasm. Its function is as follows. Component of the RavA-ViaA chaperone complex, which may act on the membrane to optimize the function of some of the respiratory chains. ViaA stimulates the ATPase activity of RavA. In Yersinia pseudotuberculosis serotype O:1b (strain IP 31758), this protein is Regulatory protein ViaA.